The chain runs to 139 residues: Ribosome-binding factor A (139 aa).

The protein belongs to the RbfA family. Monomer. Binds 30S ribosomal subunits, but not 50S ribosomal subunits or 70S ribosomes.

It is found in the cytoplasm. Its function is as follows. One of several proteins that assist in the late maturation steps of the functional core of the 30S ribosomal subunit. Associates with free 30S ribosomal subunits (but not with 30S subunits that are part of 70S ribosomes or polysomes). Required for efficient processing of 16S rRNA. May interact with the 5'-terminal helix region of 16S rRNA. The protein is Ribosome-binding factor A of Methylobacterium sp. (strain 4-46).